The following is a 158-amino-acid chain: Transcription factor BTF3 homolog 4 (158 aa).

One can recognise an NAC-A/B domain in the interval 33-98; the sequence is TADDKKLQSS…AEVKQITEML (66 aa). The interval 123-158 is disordered; the sequence is QVLDSKASKPEDIEEEDDDVPELVGNFDEASKNEAN. The span at 134–143 shows a compositional bias: acidic residues; it reads DIEEEDDDVP.

This sequence belongs to the NAC-beta family.

The protein is Transcription factor BTF3 homolog 4 (btf3l4) of Xenopus laevis (African clawed frog).